A 284-amino-acid polypeptide reads, in one-letter code: Protein pxr1 (284 aa).

The G-patch domain occupies 25-71 (TNRLGFKLLSSYGWVNGNGLGEKQHGRIHNIKVSLKDDTLGIGAKAT). The interval 149–253 (DEDRVCEDAS…KVKEGNRPAS (105 aa)) is disordered. Residues Ser-159 and Ser-160 each carry the phosphoserine modification. 2 stretches are compositionally biased toward basic residues: residues 166-181 (EKRKKHSSKKKSKKKT) and 196-206 (TKKKKKEHKKK). Composition is skewed to basic and acidic residues over residues 207 to 224 (DKESSSKKRKSGSSDKEE) and 233 to 249 (KDKPESTSSVEKVKEGN).

This sequence belongs to the PINX1 family.

The protein resides in the nucleus. Its subcellular location is the nucleolus. Functionally, involved in rRNA-processing at A0, A1 and A2 sites and negatively regulates telomerase. This is Protein pxr1 (pxr1) from Schizosaccharomyces pombe (strain 972 / ATCC 24843) (Fission yeast).